Here is a 330-residue protein sequence, read N- to C-terminus: Small ribosomal subunit protein uS15m (330 aa).

The protein belongs to the universal ribosomal protein uS15 family. In terms of assembly, component of the mitochondrial ribosome small subunit (28S) which comprises a 12S rRNA and about 30 distinct proteins.

It localises to the mitochondrion. The chain is Small ribosomal subunit protein uS15m (mrps-15) from Caenorhabditis elegans.